Reading from the N-terminus, the 209-residue chain is Glutathione S-transferase (209 aa).

A GST N-terminal domain is found at 7–91 (FFFFFFFFFS…YLSKKYNISG (85 aa)). Residues 62-63 (QV), 75-76 (QS), D109, K121, and T125 contribute to the glutathione site. Positions 93–209 (GELNEFYADM…YIANRKESVY (117 aa)) constitute a GST C-terminal domain.

This sequence belongs to the GST superfamily. In terms of assembly, homodimer. In the absence of ligands two homodimers may interact to form a tetramer.

The catalysed reaction is RX + glutathione = an S-substituted glutathione + a halide anion + H(+). Functionally, conjugation of reduced glutathione to a wide number of exogenous and endogenous hydrophobic electrophiles. May also function as a storage protein or ligandin for parasitotoxic ferriprotoporphyrin IX (hemin). This chain is Glutathione S-transferase, found in Plasmodium yoelii yoelii.